The sequence spans 538 residues: NAD(P)H-quinone oxidoreductase chain 4 1 (538 aa).

Transmembrane regions (helical) follow at residues 7–27 (FPWLTAIIALPLVAALAIPII), 37–57 (WYGLGVAFADFALMIAAFWHY), 88–108 (LSMPLLLLTGLINTLAIFAAW), 116–136 (LFYGLMLVMYSAQLGVFVAQD), 137–157 (LLLFFLMWEIELVPVYLLISI), 170–190 (FILYTAAASIFILVAGFALAF), 210–230 (AIELLAYAGFLIAFGVKLPIF), 244–264 (SAPGSMILAGVLLKMGGYALI), 278–298 (FAPVLAILGVVNIVYGACCAF), 315–335 (MGFVLIGLASYTEIGVSGAVL), 336–356 (QMVSHGLVAASLFFLTGVTYE), 388–408 (LALPGMSGFVGELMVFIGIAT), and 418–438 (VVVVLLSAVGVILTPIYLLSM).

It belongs to the complex I subunit 4 family.

It localises to the cellular thylakoid membrane. It carries out the reaction a plastoquinone + NADH + (n+1) H(+)(in) = a plastoquinol + NAD(+) + n H(+)(out). The enzyme catalyses a plastoquinone + NADPH + (n+1) H(+)(in) = a plastoquinol + NADP(+) + n H(+)(out). In terms of biological role, NDH-1 shuttles electrons from NAD(P)H, via FMN and iron-sulfur (Fe-S) centers, to quinones in the respiratory chain. The immediate electron acceptor for the enzyme in this species is believed to be plastoquinone. Couples the redox reaction to proton translocation (for every two electrons transferred, four hydrogen ions are translocated across the cytoplasmic membrane), and thus conserves the redox energy in a proton gradient. This Nostoc sp. (strain PCC 7120 / SAG 25.82 / UTEX 2576) protein is NAD(P)H-quinone oxidoreductase chain 4 1.